Consider the following 255-residue polypeptide: Syntaxin-6 (255 aa).

N-acetylserine is present on Ser2. Ser2 carries the post-translational modification Phosphoserine. The tract at residues 2–112 is interaction with BLTP3B; sequence SMEDPFFVVK…KDQMSASSVQ (111 aa). The segment at 2-168 is required for interaction with VPS51; that stretch reads SMEDPFFVVK…QAQQQLIVEQ (167 aa). Over 2–234 the chain is Cytoplasmic; the sequence is SMEDPFFVVK…VSHMTSDRRQ (233 aa). Residues 41 to 74 adopt a coiled-coil conformation; the sequence is EEIDWTTNELRNNLRSIEWDLEDLDETISIVEAN. 2 positions are modified to phosphoserine: Ser129 and Ser152. The t-SNARE coiled-coil homology domain occupies 163-225; it reads QLIVEQQDEQ…DNVMKKLAKV (63 aa). The helical; Anchor for type IV membrane protein transmembrane segment at 235-255 threads the bilayer; it reads WCAIAILFAVLLVVLTLFLVL.

The protein belongs to the syntaxin family. Identified in a complex containing STX6, STX12, VAMP4 and VTI1A. Binds EEA1. Interacts with VPS45A and GOPC. Interacts with MARCHF2; the interaction promotes MARCHF2-mediated ubiquitination and degradation of CFTR. Interacts with MARCHF3. Interacts with BLTP3B (via C-terminal coiled-coil domain). Interacts with BAIAP3; this interaction is increased in the presence of calcium. Interacts (via N-terminus) with VPS51. Interacts with VPS13B. In terms of tissue distribution, widely expressed, with relatively higher expression in brain, lung and kidney.

The protein localises to the golgi apparatus membrane. It is found in the golgi apparatus. Its subcellular location is the trans-Golgi network membrane. The protein resides in the recycling endosome membrane. SNARE promoting movement of transport vesicles to target membranes. Targets endosomes to the trans-Golgi network, and may therefore function in retrograde trafficking. Together with SNARE STX12, promotes movement of vesicles from endosomes to the cell membrane, and may therefore function in the endocytic recycling pathway. The chain is Syntaxin-6 (Stx6) from Rattus norvegicus (Rat).